The primary structure comprises 522 residues: MSNRVIIFDTTLRDGEQALAASLSVKEKLQIAMALERLGVDVMEVGFPVSSPGDFESVQTIARTIKNSRVCALSRALEKDIDAAAQALSVAEQFRIHTFISTSTIHVESKLKRSFEQVLEMAVGAVKYARRFTDDVEFSCEDAGRTPIDNLCRMVEAAIHAGARTINIPDTVGYTVPSEFGGIIQTLFNRVPNIDQAIISVHCHDDLGMSVANSITAVQHGARQIECTMNGIGERAGNCSLEEIAMILATRKNLLGVETGINAKEIHRTSNLVSQLCNMPIQSNKAIVGANAFTHSSGIHQDGMLKAQNTYEIMTPESIGLNRNNLNMTSRSGRHVIKHRMEEMGYSEQDFNLDALYEQFLHLADKKGQVFDYDLEALAFMEAQAAEDNFYQLQQLVVQSDSTEGVATATVRIDVGGEIKTEAATGNGPVDAAYNAIARATDRRIDIISYKLGAKGEGQNALGQVDITAVYHEQNFHGVGLATDVVEASARALVHVMNLTCRADKVADYKQNMHKNRELGGV.

The 263-residue stretch at 5–267 (VIIFDTTLRD…ETGINAKEIH (263 aa)) folds into the Pyruvate carboxyltransferase domain. Residues D14, H202, H204, and N238 each contribute to the Mn(2+) site. A regulatory domain region spans residues 392-522 (QLQQLVVQSD…MHKNRELGGV (131 aa)).

This sequence belongs to the alpha-IPM synthase/homocitrate synthase family. LeuA type 1 subfamily. As to quaternary structure, homodimer. Mn(2+) is required as a cofactor.

It localises to the cytoplasm. The enzyme catalyses 3-methyl-2-oxobutanoate + acetyl-CoA + H2O = (2S)-2-isopropylmalate + CoA + H(+). The protein operates within amino-acid biosynthesis; L-leucine biosynthesis; L-leucine from 3-methyl-2-oxobutanoate: step 1/4. In terms of biological role, catalyzes the condensation of the acetyl group of acetyl-CoA with 3-methyl-2-oxobutanoate (2-ketoisovalerate) to form 3-carboxy-3-hydroxy-4-methylpentanoate (2-isopropylmalate). This Shewanella sp. (strain ANA-3) protein is 2-isopropylmalate synthase.